The chain runs to 304 residues: Fluoroacetate dehalogenase (304 aa).

One can recognise an AB hydrolase-1 domain in the interval 26–151 (PALLLLHGFP…FVARAYWHWY (126 aa)). The active-site Nucleophile is D104. Fluoroacetate-binding residues include R105, R108, H149, W150, and Y212. Catalysis depends on H271, which acts as the Proton acceptor.

This sequence belongs to the AB hydrolase superfamily. Epoxide hydrolase family. Homodimer.

It carries out the reaction a haloacetate + H2O = a halide anion + glycolate + H(+). The catalysed reaction is fluoroacetate + H2O = fluoride + glycolate + H(+). Its function is as follows. Catalyzes the hydrolytic defluorination of fluoroacetate to produce glycolate. Has only very low activity towards chloroacetate and bromoacetate. The chain is Fluoroacetate dehalogenase (fac-dex) from Burkholderia sp.